Here is a 630-residue protein sequence, read N- to C-terminus: UvrABC system protein C (630 aa).

A GIY-YIG domain is found at 18–97 (TQSGVYLMKN…IKKHRPKYNI (80 aa)). In terms of domain architecture, UVR spans 207-242 (KKVIKSMTEKMMGAADEEKFEVAARLRDSIEAIKAI).

Belongs to the UvrC family. As to quaternary structure, interacts with UvrB in an incision complex.

The protein resides in the cytoplasm. Its function is as follows. The UvrABC repair system catalyzes the recognition and processing of DNA lesions. UvrC both incises the 5' and 3' sides of the lesion. The N-terminal half is responsible for the 3' incision and the C-terminal half is responsible for the 5' incision. The chain is UvrABC system protein C from Bdellovibrio bacteriovorus (strain ATCC 15356 / DSM 50701 / NCIMB 9529 / HD100).